Reading from the N-terminus, the 384-residue chain is CDP-diacylglycerol--serine O-phosphatidyltransferase (384 aa).

The protein belongs to the CDP-alcohol phosphatidyltransferase class-I family.

Its subcellular location is the membrane. It carries out the reaction a CDP-1,2-diacyl-sn-glycerol + L-serine = a 1,2-diacyl-sn-glycero-3-phospho-L-serine + CMP + H(+). Its pathway is phospholipid metabolism; phosphatidylethanolamine biosynthesis; phosphatidylethanolamine from CDP-diacylglycerol: step 1/2. The protein is CDP-diacylglycerol--serine O-phosphatidyltransferase (PSS) of Encephalitozoon cuniculi (strain GB-M1) (Microsporidian parasite).